A 324-amino-acid chain; its full sequence is 3-hydroxyisobutyrate dehydrogenase, mitochondrial (324 aa).

Residues 1 to 25 constitute a mitochondrion transit peptide; that stretch reads MSLRVMSPAMLNAWSQTLVRAMSTQ. Residues 29–58, 92–93, and threonine 121 each bind NAD(+); these read KNIG…HVFD and LP. The active site involves lysine 196. Lysine 271 provides a ligand contact to NAD(+).

This sequence belongs to the HIBADH-related family. 3-hydroxyisobutyrate dehydrogenase subfamily.

It localises to the mitochondrion. The enzyme catalyses 3-hydroxy-2-methylpropanoate + NAD(+) = 2-methyl-3-oxopropanoate + NADH + H(+). The protein operates within amino-acid degradation; L-valine degradation. This chain is 3-hydroxyisobutyrate dehydrogenase, mitochondrial, found in Drosophila melanogaster (Fruit fly).